Here is a 431-residue protein sequence, read N- to C-terminus: Levansucrase Lscbeta (431 aa).

Residues tryptophan 61, aspartate 62, alanine 148, arginine 218, and aspartate 219 each coordinate sucrose. Aspartate 62 serves as the catalytic Nucleophile. The active-site Proton donor/acceptor is the glutamate 303.

This sequence belongs to the glycosyl hydrolase 68 family. In terms of assembly, homodimer.

The enzyme catalyses [6)-beta-D-fructofuranosyl-(2-&gt;](n) alpha-D-glucopyranoside + sucrose = [6)-beta-D-fructofuranosyl-(2-&gt;](n+1) alpha-D-glucopyranoside + D-glucose. With respect to regulation, sucrose hydrolase activity is negatively affected by salt concentration. The levan polymerization rate is constant regardless of sucrose concentration. In terms of biological role, catalyzes the synthesis of levan, a fructose polymer, by transferring the fructosyl moiety from sucrose to a growing acceptor molecule. Also displays sucrose hydrolase activity. The protein is Levansucrase Lscbeta of Pseudomonas syringae pv. actinidiae.